A 135-amino-acid polypeptide reads, in one-letter code: NAD(P)H-quinone oxidoreductase subunit 3 (135 aa).

Transmembrane regions (helical) follow at residues 15 to 35 (LMFVLPGYDAFLGFLLIAAAV), 79 to 99 (MFALVFVIFDVETVFLYPWAV), and 104 to 124 (LGLLAFIEALVFITILLVALA).

Belongs to the complex I subunit 3 family. NDH-1 can be composed of about 15 different subunits; different subcomplexes with different compositions have been identified which probably have different functions.

The protein resides in the cellular thylakoid membrane. It catalyses the reaction a plastoquinone + NADH + (n+1) H(+)(in) = a plastoquinol + NAD(+) + n H(+)(out). The catalysed reaction is a plastoquinone + NADPH + (n+1) H(+)(in) = a plastoquinol + NADP(+) + n H(+)(out). In terms of biological role, NDH-1 shuttles electrons from an unknown electron donor, via FMN and iron-sulfur (Fe-S) centers, to quinones in the respiratory and/or the photosynthetic chain. The immediate electron acceptor for the enzyme in this species is believed to be plastoquinone. Couples the redox reaction to proton translocation, and thus conserves the redox energy in a proton gradient. Cyanobacterial NDH-1 also plays a role in inorganic carbon-concentration. This Synechococcus sp. (strain CC9311) protein is NAD(P)H-quinone oxidoreductase subunit 3.